Consider the following 367-residue polypeptide: 3-dehydroquinate synthase (367 aa).

NAD(+) is bound by residues 69-74 (DGEAFK), 103-107 (GVIGD), 127-128 (TT), lysine 140, and lysine 149. Residues glutamate 182, histidine 245, and histidine 262 each coordinate Zn(2+).

The protein belongs to the sugar phosphate cyclases superfamily. Dehydroquinate synthase family. Requires Co(2+) as cofactor. It depends on Zn(2+) as a cofactor. NAD(+) serves as cofactor.

It localises to the cytoplasm. It catalyses the reaction 7-phospho-2-dehydro-3-deoxy-D-arabino-heptonate = 3-dehydroquinate + phosphate. Its pathway is metabolic intermediate biosynthesis; chorismate biosynthesis; chorismate from D-erythrose 4-phosphate and phosphoenolpyruvate: step 2/7. Its function is as follows. Catalyzes the conversion of 3-deoxy-D-arabino-heptulosonate 7-phosphate (DAHP) to dehydroquinate (DHQ). The sequence is that of 3-dehydroquinate synthase from Pseudomonas syringae pv. syringae (strain B728a).